We begin with the raw amino-acid sequence, 94 residues long: MYAILFELDTNCLNDNYEGNTYHNSYKLVNDFMIENGFTWKQGSVYFGGANIDAVTCVLVVQKLSKKYPWFSTCVKDVRMLRIEENNDLLPAIS.

Belongs to the VapD ribonuclease family. In terms of assembly, homodimer.

Its function is as follows. Cleaves ssRNA, mostly between U:A. The protein is Endoribonuclease VapD 2 of Riemerella anatipestifer (Moraxella anatipestifer).